Here is a 430-residue protein sequence, read N- to C-terminus: Enolase (430 aa).

Gln-163 is a (2R)-2-phosphoglycerate binding site. Glu-205 (proton donor) is an active-site residue. The Mg(2+) site is built by Asp-242, Glu-286, and Asp-313. Positions 338, 367, 368, and 389 each coordinate (2R)-2-phosphoglycerate. Catalysis depends on Lys-338, which acts as the Proton acceptor.

This sequence belongs to the enolase family. Mg(2+) is required as a cofactor.

It is found in the cytoplasm. The protein resides in the secreted. The protein localises to the cell surface. It catalyses the reaction (2R)-2-phosphoglycerate = phosphoenolpyruvate + H2O. It functions in the pathway carbohydrate degradation; glycolysis; pyruvate from D-glyceraldehyde 3-phosphate: step 4/5. In terms of biological role, catalyzes the reversible conversion of 2-phosphoglycerate (2-PG) into phosphoenolpyruvate (PEP). It is essential for the degradation of carbohydrates via glycolysis. This Geotalea daltonii (strain DSM 22248 / JCM 15807 / FRC-32) (Geobacter daltonii) protein is Enolase.